The following is a 420-amino-acid chain: Transcriptional regulator Myc-B (420 aa).

The 9aaTAD signature appears at 78 to 86 (EMVTEFLGG). Disordered stretches follow at residues 141-181 (ALST…LQDP), 203-275 (ASSP…HHSP), and 319-345 (SNNR…NVLE). Positions 143-160 (STSQCQSQPPQSPLKSPS) are enriched in low complexity. Over residues 161-172 (CDGSLNLGGTNR) the composition is skewed to polar residues. A compositionally biased stretch (acidic residues) spans 225–246 (ESEDEQEDDDDDEDCDEEEEID). The segment covering 249–262 (TVEKRQTASRRMES) has biased composition (basic and acidic residues). Polar residues predominate over residues 319–329 (SNNRKCASPRS). A bHLH domain is found at 336–388 (DKRRTHNVLERQRRNELKLSFFALRDQVPRWRNNEKAPKVVILKKATEYAISM). Positions 395-416 (LIRETEQLKYRKEQLKQRLQQL) are leucine-zipper.

As to quaternary structure, efficient DNA binding requires dimerization with another bHLH protein. Binds DNA as a heterodimer with MAX.

The protein localises to the nucleus. Transcription factor that binds DNA in a non-specific manner, yet also specifically recognizes the core sequence 5'-CAC[GA]TG-3'. Activates the transcription of growth-related genes. This chain is Transcriptional regulator Myc-B (myc-b), found in Xenopus laevis (African clawed frog).